We begin with the raw amino-acid sequence, 100 residues long: Urease subunit gamma (100 aa).

The protein belongs to the urease gamma subunit family. In terms of assembly, heterotrimer of UreA (gamma), UreB (beta) and UreC (alpha) subunits. Three heterotrimers associate to form the active enzyme.

Its subcellular location is the cytoplasm. The catalysed reaction is urea + 2 H2O + H(+) = hydrogencarbonate + 2 NH4(+). It functions in the pathway nitrogen metabolism; urea degradation; CO(2) and NH(3) from urea (urease route): step 1/1. The chain is Urease subunit gamma from Dinoroseobacter shibae (strain DSM 16493 / NCIMB 14021 / DFL 12).